A 162-amino-acid polypeptide reads, in one-letter code: Phosphopantetheine adenylyltransferase (162 aa).

Thr-10 is a binding site for substrate. ATP-binding positions include 10-11 (TF) and His-18. 3 residues coordinate substrate: Lys-42, Leu-74, and Arg-88. Residues 89–91 (GLR), Glu-99, and 124–130 (NSFISST) each bind ATP.

It belongs to the bacterial CoaD family. In terms of assembly, homohexamer. Mg(2+) is required as a cofactor.

It localises to the cytoplasm. The enzyme catalyses (R)-4'-phosphopantetheine + ATP + H(+) = 3'-dephospho-CoA + diphosphate. The protein operates within cofactor biosynthesis; coenzyme A biosynthesis; CoA from (R)-pantothenate: step 4/5. Functionally, reversibly transfers an adenylyl group from ATP to 4'-phosphopantetheine, yielding dephospho-CoA (dPCoA) and pyrophosphate. In Alteromonas mediterranea (strain DSM 17117 / CIP 110805 / LMG 28347 / Deep ecotype), this protein is Phosphopantetheine adenylyltransferase.